A 462-amino-acid polypeptide reads, in one-letter code: Argininosuccinate lyase (462 aa).

This sequence belongs to the lyase 1 family. Argininosuccinate lyase subfamily.

Its subcellular location is the cytoplasm. The catalysed reaction is 2-(N(omega)-L-arginino)succinate = fumarate + L-arginine. Its pathway is amino-acid biosynthesis; L-arginine biosynthesis; L-arginine from L-ornithine and carbamoyl phosphate: step 3/3. The protein is Argininosuccinate lyase of Chloroflexus aggregans (strain MD-66 / DSM 9485).